The sequence spans 372 residues: PqqA peptide cyclase (372 aa).

Positions 4-219 (APPPLSVLLE…VDTARRELGD (216 aa)) constitute a Radical SAM core domain. [4Fe-4S] cluster contacts are provided by cysteine 18, cysteine 22, and cysteine 25. The tract at residues 342-372 (ATAEREAAAPAPEFIYRRPERPAPATADTLE) is disordered.

It belongs to the radical SAM superfamily. PqqE family. Interacts with PqqD. The interaction is necessary for activity of PqqE. [4Fe-4S] cluster is required as a cofactor.

The catalysed reaction is [PQQ precursor protein] + S-adenosyl-L-methionine = E-Y cross-linked-[PQQ precursor protein] + 5'-deoxyadenosine + L-methionine + H(+). It functions in the pathway cofactor biosynthesis; pyrroloquinoline quinone biosynthesis. In terms of biological role, catalyzes the cross-linking of a glutamate residue and a tyrosine residue in the PqqA protein as part of the biosynthesis of pyrroloquinoline quinone (PQQ). This Xanthomonas oryzae pv. oryzae (strain MAFF 311018) protein is PqqA peptide cyclase.